Reading from the N-terminus, the 112-residue chain is Putative pterin-4-alpha-carbinolamine dehydratase (112 aa).

This sequence belongs to the pterin-4-alpha-carbinolamine dehydratase family.

The enzyme catalyses (4aS,6R)-4a-hydroxy-L-erythro-5,6,7,8-tetrahydrobiopterin = (6R)-L-erythro-6,7-dihydrobiopterin + H2O. This Shewanella oneidensis (strain ATCC 700550 / JCM 31522 / CIP 106686 / LMG 19005 / NCIMB 14063 / MR-1) protein is Putative pterin-4-alpha-carbinolamine dehydratase.